The chain runs to 208 residues: Thymidylate kinase (208 aa).

7–14 (GIDGAGKT) is an ATP binding site.

It belongs to the thymidylate kinase family.

The enzyme catalyses dTMP + ATP = dTDP + ADP. Its function is as follows. Phosphorylation of dTMP to form dTDP in both de novo and salvage pathways of dTTP synthesis. The chain is Thymidylate kinase (tmk) from Xylella fastidiosa (strain 9a5c).